We begin with the raw amino-acid sequence, 531 residues long: Peptide chain release factor 3 (531 aa).

Positions 13–282 (SKRRTFAIIS…GLTQWAPSPM (270 aa)) constitute a tr-type G domain. Residues 22-29 (SHPDAGKT), 90-94 (DTPGH), and 144-147 (NKLD) contribute to the GTP site.

This sequence belongs to the TRAFAC class translation factor GTPase superfamily. Classic translation factor GTPase family. PrfC subfamily.

It is found in the cytoplasm. Its function is as follows. Increases the formation of ribosomal termination complexes and stimulates activities of RF-1 and RF-2. It binds guanine nucleotides and has strong preference for UGA stop codons. It may interact directly with the ribosome. The stimulation of RF-1 and RF-2 is significantly reduced by GTP and GDP, but not by GMP. The polypeptide is Peptide chain release factor 3 (Vibrio cholerae serotype O1 (strain ATCC 39541 / Classical Ogawa 395 / O395)).